Consider the following 276-residue polypeptide: Putative pyruvate, phosphate dikinase regulatory protein 2 (276 aa).

146 to 153 (GVSRTSKT) contacts ADP.

Belongs to the pyruvate, phosphate/water dikinase regulatory protein family. PDRP subfamily.

It catalyses the reaction N(tele)-phospho-L-histidyl/L-threonyl-[pyruvate, phosphate dikinase] + ADP = N(tele)-phospho-L-histidyl/O-phospho-L-threonyl-[pyruvate, phosphate dikinase] + AMP + H(+). It carries out the reaction N(tele)-phospho-L-histidyl/O-phospho-L-threonyl-[pyruvate, phosphate dikinase] + phosphate + H(+) = N(tele)-phospho-L-histidyl/L-threonyl-[pyruvate, phosphate dikinase] + diphosphate. Bifunctional serine/threonine kinase and phosphorylase involved in the regulation of the pyruvate, phosphate dikinase (PPDK) by catalyzing its phosphorylation/dephosphorylation. This chain is Putative pyruvate, phosphate dikinase regulatory protein 2, found in Enterococcus faecalis (strain ATCC 700802 / V583).